Consider the following 490-residue polypeptide: MTAPVIMVLGTASSVGKSVLVTALCRLARQRGLRVAPFKAQNMSNNAAVTADGREIARSVAVQAAAAQIEPTVEMNPILIKPEGQRRSQIVVEGRPWRTLDALDFWRRKEMLWEIVTRNLDALRARCDLVIAEGAGSPVELNLKAGDIVNMRVARYVGARCVLVGDIDTGGIFAQLLGTLMLLEPEERELVQGLLVNRFRGDPALFEDGVRILEQRSGLPVLGVIPWFEDLHLPEEDAVALERGNRLARDGLTIAVIHLPAIANFDDFDPLAREPGVTLRYITHPDDLSDAVAVILPGTKHTLAARRWLRERGFDVALHQFPGSIVGICGGYQLLGERISDPLGVEGQGGDEPGLGLLPVETIFSAAKLTVQADAVSRAPWAVGARLHGYEIHMGRTRSIDADRPLITVTQRGADAVEEHDGHISKDGRVWGCYLHGIFANDAFRRGWLQHLGWHPGEELNPSTDPFDHLAQHVAAAIGEKQVRWLFDIG.

A GATase cobBQ-type domain is found at 251–444 (GLTIAVIHLP…LHGIFANDAF (194 aa)). The active-site Nucleophile is Cys-329. His-436 is a catalytic residue.

It belongs to the CobB/CobQ family. CobQ subfamily.

The protein operates within cofactor biosynthesis; adenosylcobalamin biosynthesis. Catalyzes amidations at positions B, D, E, and G on adenosylcobyrinic A,C-diamide. NH(2) groups are provided by glutamine, and one molecule of ATP is hydrogenolyzed for each amidation. This is Cobyric acid synthase from Roseiflexus castenholzii (strain DSM 13941 / HLO8).